The primary structure comprises 118 residues: REPTOR-binding partner (118 aa).

The segment covering 1 to 20 (MADMEIQSNKMSITEETQVQ) has biased composition (polar residues). Residues 1 to 53 (MADMEIQSNKMSITEETQVQTRKECGKRGRKPGRKTSTEKLDMKAKLERSRQS) are disordered. Basic and acidic residues predominate over residues 36–53 (TSTEKLDMKAKLERSRQS). A basic motif region spans residues 40-77 (KLDMKAKLERSRQSARECRARKKLRYQYLEELVADREK). Positions 40–90 (KLDMKAKLERSRQSARECRARKKLRYQYLEELVADREKAVVALRTELERLI) constitute a bZIP domain. A leucine-zipper region spans residues 82–89 (LRTELERL).

Belongs to the bZIP family. ATF subfamily. In terms of assembly, homodimer. Interacts (via C-terminus) with REPTOR (via C-terminus).

It is found in the nucleus. It localises to the chromosome. Functionally, transcriptional regulator that acts in the TORC1 signaling pathway to regulate energy homeostasis and promote survival during nutrient deprivation. Interacts with REPTOR to form a transcriptional activator complex that functions downstream of TORC1 to up-regulate the expression of most target genes induced by TORC1 inhibition. In the complex, acts to enhance the binding of the transcriptional activator REPTOR to the regulatory sequences of target genes. Under normal conditions TORC1 is active, inhibiting the formation of the REPTOR/REPTOR-BP complex by phosphorylating REPTOR and mediates its cytoplasmic retention by forming a docking site for 14-3-3 proteins. Upon TORC1 inhibition resulting from nutrient stress, REPTOR is recruited into the nucleus where it interacts with REPTOR-BP and together they maintain organismal metabolism by activating the expression of target stress response genes including those involved in glycogenesis and triglyceride biosynthesis. The complex also appears to negatively regulate some aspects of TORC1-dependent larval growth. This chain is REPTOR-binding partner, found in Drosophila melanogaster (Fruit fly).